Reading from the N-terminus, the 120-residue chain is UPF0102 protein Pfl01_4685 (120 aa).

Belongs to the UPF0102 family.

This chain is UPF0102 protein Pfl01_4685, found in Pseudomonas fluorescens (strain Pf0-1).